Here is a 340-residue protein sequence, read N- to C-terminus: Ketol-acid reductoisomerase (NADP(+)) (340 aa).

The 180-residue stretch at 3 to 182 (VQMEYEKDVK…GAARVGLLET (180 aa)) folds into the KARI N-terminal Rossmann domain. Residues 26–29 (YGSQ), Arg-49, Ser-53, and 83–86 (DEIQ) each bind NADP(+). Residue His-108 is part of the active site. An NADP(+)-binding site is contributed by Gly-134. In terms of domain architecture, KARI C-terminal knotted spans 183–328 (TYKEETEEDL…AELRKAMPFV (146 aa)). The Mg(2+) site is built by Asp-191, Glu-195, Glu-227, and Glu-231. Ser-252 contacts substrate.

It belongs to the ketol-acid reductoisomerase family. Mg(2+) is required as a cofactor.

It catalyses the reaction (2R)-2,3-dihydroxy-3-methylbutanoate + NADP(+) = (2S)-2-acetolactate + NADPH + H(+). The catalysed reaction is (2R,3R)-2,3-dihydroxy-3-methylpentanoate + NADP(+) = (S)-2-ethyl-2-hydroxy-3-oxobutanoate + NADPH + H(+). Its pathway is amino-acid biosynthesis; L-isoleucine biosynthesis; L-isoleucine from 2-oxobutanoate: step 2/4. It participates in amino-acid biosynthesis; L-valine biosynthesis; L-valine from pyruvate: step 2/4. Functionally, involved in the biosynthesis of branched-chain amino acids (BCAA). Catalyzes an alkyl-migration followed by a ketol-acid reduction of (S)-2-acetolactate (S2AL) to yield (R)-2,3-dihydroxy-isovalerate. In the isomerase reaction, S2AL is rearranged via a Mg-dependent methyl migration to produce 3-hydroxy-3-methyl-2-ketobutyrate (HMKB). In the reductase reaction, this 2-ketoacid undergoes a metal-dependent reduction by NADPH to yield (R)-2,3-dihydroxy-isovalerate. This Streptococcus pneumoniae (strain CGSP14) protein is Ketol-acid reductoisomerase (NADP(+)).